Consider the following 364-residue polypeptide: Heat-inducible transcription repressor HrcA (364 aa).

Belongs to the HrcA family.

Negative regulator of class I heat shock genes (grpE-dnaK-dnaJ and groELS operons). Prevents heat-shock induction of these operons. In Cyanothece sp. (strain PCC 7425 / ATCC 29141), this protein is Heat-inducible transcription repressor HrcA.